A 266-amino-acid polypeptide reads, in one-letter code: Gasdermin bGSDM (266 aa).

A lipid anchor (S-palmitoyl cysteine) is attached at Cys-3. 4 consecutive transmembrane segments (beta stranded) span residues 69–85 (ISGQ…GLSI), 97–115 (KLGL…FEFQ), 163–180 (KFTI…ELTI), and 189–205 (GNVK…KICY).

This sequence belongs to the bacterial gasdermin family. Monomer. As to quaternary structure, forms large, homooligomeric ring-shaped pores when inserted in membranes. Palmitoylation helps stabilize the inactive state; may self palmitoylate. Palmitoylation plays a significant role in pore formation.

Its subcellular location is the cytoplasm. It is found in the cell inner membrane. The full-length protein before cleavage is inactive: intramolecular interactions between the N-terminal domain and the C-terminal region as well as the lipid modification, mediate autoinhibition. The pyroptosis-like-inducing activity is carried by the released N-terminal domain (Gasdermin bGSDM, N-terminus). Precursor of a pore-forming protein involved in defense against bacteriophages. Expression of bGSDM and the neighboring protease gene (Ga0182885_104520) is toxic in E.coli. Cleavage of this precursor by its dedicated protease releases the active moiety (gasdermin bGSDM, N-terminus) which inserts into membranes, forming pores and triggering cell death. In terms of biological role, pore-forming protein that causes membrane permeabilization via a pyroptosis-like activity. Makes ring-like pores when released. This Desulfuromonadales bacterium protein is Gasdermin bGSDM.